A 556-amino-acid chain; its full sequence is Formate--tetrahydrofolate ligase (556 aa).

65 to 72 (TPAGEGKS) contributes to the ATP binding site.

It belongs to the formate--tetrahydrofolate ligase family.

The enzyme catalyses (6S)-5,6,7,8-tetrahydrofolate + formate + ATP = (6R)-10-formyltetrahydrofolate + ADP + phosphate. The protein operates within one-carbon metabolism; tetrahydrofolate interconversion. This Clostridium beijerinckii (strain ATCC 51743 / NCIMB 8052) (Clostridium acetobutylicum) protein is Formate--tetrahydrofolate ligase.